A 47-amino-acid chain; its full sequence is Conotoxin reg3.11 (47 aa).

A propeptide spanning residues 1–31 is cleaved from the precursor; that stretch reads DQPVERHAENKRHLIPAVMRAMTMNADRRVQ. 3 cysteine pairs are disulfide-bonded: C32–C44, C33–C42, and C38–C45. Positions 46-47 are excised as a propeptide; that stretch reads YH.

This sequence belongs to the conotoxin M superfamily. Expressed by the venom duct.

Its subcellular location is the secreted. This is Conotoxin reg3.11 from Conus regius (Crown cone).